We begin with the raw amino-acid sequence, 329 residues long: IDS-like terpene synthase 1 (329 aa).

Positions 79 and 83 each coordinate Mg(2+).

The protein belongs to the FPP/GGPP synthase family. Mg(2+) serves as cofactor.

The enzyme catalyses (2E)-geranyl diphosphate + H2O = linalool + diphosphate. It catalyses the reaction (2E,6E)-farnesyl diphosphate + H2O = (6E)-nerolidol + diphosphate. Functionally, terpene synthase that shows monoterpene synthase activity and produces linalool, using geranyl diphosphate (GPP) as substrate. Also shows sesquiterpene synthase activity as it is able to convert farnesyl diphosphate (FPP) into (E)-nerolidol. The polypeptide is IDS-like terpene synthase 1 (Melampsora lini (Rust fungus)).